Here is a 562-residue protein sequence, read N- to C-terminus: MTLSGILAIFLVVLALVACAWPLGGYIYRTFVGERVRPDAVMVPVERAIYRLIGVNPEVEMDWKAYLRAMMVSNLVMALFAYAVFRLQGVLPLNPAHIPAMPPYLAFNTAASFITNTNWQNYAGEQSLSYLSQMIGITFLQFTSAATGLAAAMAFLRGLSRQKTDALGNFWVDLVKAHTRLLLPIAAILAVLLLALGVPETLSGPAVVHTLAGSMQTIARGPVATLEAIKQLGTNGGGFFNANSAHPFENPNAWTCILEIMGMGLIPTALVFTAGHFLRSRRLAIVLCTLLGAILLAGAYIVYAYEAAGNPILAHALGIHGPNMEGKEVRFGLPLTSLFVAATTAYTTGAVNAMHDSLMPLSGMVPLLFMMFNLIFGGKGVGLLNILMFLIIAVFISGLMVGRTPEIFGKKIEAREMKLATAAMLVHPFVILVPTAIAMALPSARASMGNPGLHGFTEVLYAFTSAAANNGSAFAGLNGNTPFYNISIGLVMLFGRYVSIIAMLAIAGSLAGKARIPETSGTLKVDTFAFGYVFVAVFIIVGALTFFPYLALGPIGEQLQLG.

12 consecutive transmembrane segments (helical) span residues Gly5–Gly25, Ala65–Phe85, Ile135–Phe155, Leu181–Thr201, Ile257–Phe277, Leu283–Tyr303, Phe331–Val351, Leu358–Gly378, Val381–Val401, Ala422–Pro442, Ile486–Ile506, and Phe528–Pro548.

This sequence belongs to the KdpA family. The system is composed of three essential subunits: KdpA, KdpB and KdpC.

It localises to the cell membrane. In terms of biological role, part of the high-affinity ATP-driven potassium transport (or Kdp) system, which catalyzes the hydrolysis of ATP coupled with the electrogenic transport of potassium into the cytoplasm. This subunit binds the extracellular potassium ions and delivers the ions to the membrane domain of KdpB through an intramembrane tunnel. The sequence is that of Potassium-transporting ATPase potassium-binding subunit from Alicyclobacillus acidocaldarius subsp. acidocaldarius (strain ATCC 27009 / DSM 446 / BCRC 14685 / JCM 5260 / KCTC 1825 / NBRC 15652 / NCIMB 11725 / NRRL B-14509 / 104-IA) (Bacillus acidocaldarius).